The primary structure comprises 118 residues: Large ribosomal subunit protein bL19 (118 aa).

The protein belongs to the bacterial ribosomal protein bL19 family.

This protein is located at the 30S-50S ribosomal subunit interface and may play a role in the structure and function of the aminoacyl-tRNA binding site. The sequence is that of Large ribosomal subunit protein bL19 (rplS) from Serratia marcescens.